Reading from the N-terminus, the 272-residue chain is Aquaporin FA-CHIP (272 aa).

Residues 1 to 17 lie on the Cytoplasmic side of the membrane; the sequence is MASEFKKKAFWRAVIAE. Residues 18-35 traverse the membrane as a helical segment; that stretch reads FLAMILFVFISIGAALGF. Residues 36-52 are Extracellular-facing; the sequence is NFPIEEKANQTVGRSQD. The N-linked (GlcNAc...) asparagine glycan is linked to N44. The helical transmembrane segment at 53-71 threads the bilayer; that stretch reads IVKVSLAFGISIATMAQSV. Topologically, residues 72 to 97 are cytoplasmic; the sequence is GHVSGAHLNPAVTLGCLLSCQISILK. An NPA 1 motif is present at residues 80 to 82; it reads NPA. Residues 98 to 119 form a helical membrane-spanning segment; that stretch reads AVMYIIAQCLGAVVATAILSGI. The Extracellular portion of the chain corresponds to 120–139; the sequence is TSGLENNSLGLNGLSPGVSA. Residue N125 is glycosylated (N-linked (GlcNAc...) asparagine). The chain crosses the membrane as a helical span at residues 140 to 160; sequence GQGLGVEILVTFQLVLCVVAV. At 161 to 168 the chain is on the cytoplasmic side; the sequence is TDRRRHDV. Residues 169 to 188 form a helical membrane-spanning segment; sequence SGSVPLAIGLSVALGHLIAI. Over 189–214 the chain is Extracellular; sequence DYTGCGMNPARSFGSAVLTKNFTYHW. The NPA 2 signature appears at 196–198; sequence NPA. N209 carries an N-linked (GlcNAc...) asparagine glycan. A helical transmembrane segment spans residues 215 to 236; it reads IFWVGPMIGGAAAAIIYDFILA. Residues 237-272 are Cytoplasmic-facing; that stretch reads PRTSDLTDRMKVWTNGQVEEYELDGDDNTRVEMKPK.

Belongs to the MIP/aquaporin (TC 1.A.8) family.

The protein localises to the membrane. Functionally, forms a water-specific channel. The protein is Aquaporin FA-CHIP (AQPA) of Pelophylax lessonae (Pool frog).